The following is a 293-amino-acid chain: MAQITAAQVKELRDRTQVGMMDAKKALVAADGDMDKAIDVLREKGLAKAAKKSGNIAAEGLAEIAVNGNTAAIIEVNSETDFVASNDQFKDYVNNVAAAIAANKPADLEAAKATKMSDGQTVDEGAIALTTVIGEKISLRRFQVVEKTDNEHFGKYLHNGGQIAALTVIEGADDDTAKDVAMHVAAINPEYLDRTKVPAEELKHQTDIFTEETKNEGKPEKIVPRIVEGRVNKWLGEISLVDQEFVKDPDQTVAKYVAAKGGKVKGFVRYEVGEGIEKKQENFADEVMDQIKG.

The involved in Mg(2+) ion dislocation from EF-Tu stretch occupies residues 80-83 (TDFV).

It belongs to the EF-Ts family.

Its subcellular location is the cytoplasm. In terms of biological role, associates with the EF-Tu.GDP complex and induces the exchange of GDP to GTP. It remains bound to the aminoacyl-tRNA.EF-Tu.GTP complex up to the GTP hydrolysis stage on the ribosome. The sequence is that of Elongation factor Ts from Lacticaseibacillus casei (strain BL23) (Lactobacillus casei).